The following is an 864-amino-acid chain: Leucine--tRNA ligase (864 aa).

Positions 42–52 (PYPSGKLHMGH) match the 'HIGH' region motif. The 'KMSKS' region motif lies at 624-628 (KMSKS). Residue lysine 627 coordinates ATP.

The protein belongs to the class-I aminoacyl-tRNA synthetase family.

The protein localises to the cytoplasm. It carries out the reaction tRNA(Leu) + L-leucine + ATP = L-leucyl-tRNA(Leu) + AMP + diphosphate. The sequence is that of Leucine--tRNA ligase from Burkholderia ambifaria (strain ATCC BAA-244 / DSM 16087 / CCUG 44356 / LMG 19182 / AMMD) (Burkholderia cepacia (strain AMMD)).